Here is a 429-residue protein sequence, read N- to C-terminus: Argininosuccinate lyase (429 aa).

This sequence belongs to the lyase 1 family. Argininosuccinate lyase subfamily.

The protein localises to the cytoplasm. It catalyses the reaction 2-(N(omega)-L-arginino)succinate = fumarate + L-arginine. Its pathway is amino-acid biosynthesis; L-arginine biosynthesis; L-arginine from L-ornithine and carbamoyl phosphate: step 3/3. This Pyrobaculum neutrophilum (strain DSM 2338 / JCM 9278 / NBRC 100436 / V24Sta) (Thermoproteus neutrophilus) protein is Argininosuccinate lyase.